The following is a 1092-amino-acid chain: Myelin regulatory factor (1092 aa).

Over 1–730 (MDVEDENETL…CVSQRFLQAT (730 aa)) the chain is Cytoplasmic. Disordered stretches follow at residues 145–168 (SYAA…PQQL), 187–210 (PPSR…SIHQ), and 258–282 (QQHG…TNTL). Positions 196-205 (PPHLQGPLPP) are enriched in pro residues. The NDT80 DNA-binding region spans 246–507 (AQQSQMLHQL…SNPGQFESDS (262 aa)). Residues 553–662 (SDIRAKESVE…KLTDNLETRI (110 aa)) form the Peptidase S74 domain. Positions 646-677 (GAVKELCKLTDNLETRIDELERWSHKLAKLRR) form a coiled coil. Residues 681–695 (MKSTNSHTGSSQFSR) are compositionally biased toward polar residues. Positions 681–714 (MKSTNSHTGSSQFSRAGSVPYKQRPPKVMGKTVP) are disordered. The chain crosses the membrane as a helical span at residues 731 to 751 (IIALVIIMAFSVISMTTLYVL). Residues 752–1092 (NLRSEDDMLG…YYFRFYRLCD (341 aa)) are Lumenal-facing. Disordered stretches follow at residues 798 to 817 (TTQL…SPDW) and 849 to 945 (ITRK…DSRY). Composition is skewed to polar residues over residues 849–867 (ITRK…TDPA) and 928–945 (TPIT…DSRY). 4 N-linked (GlcNAc...) asparagine glycosylation sites follow: N941, N961, N974, and N996.

The protein belongs to the MRF family. Homotrimer. In terms of processing, follows autocatalytic cleavage via the peptidase S74 domain. Autoprocessing is apparently constitutive and is essential for transcriptional activity.

It is found in the endoplasmic reticulum membrane. The protein resides in the nucleus. It localises to the cytoplasm. Constitutes a precursor of the transcription factor. Mediates the autocatalytic cleavage that releases the Myelin regulatory factor, N-terminal component that specifically activates transcription of central nervous system (CNS) myelin genes. In terms of biological role, membrane-bound part that has no transcription factor activity and remains attached to the endoplasmic reticulum membrane following cleavage. Its function is as follows. Transcription factor that specifically activates expression of myelin genes during oligodendrocyte (OL) maturation, thereby playing a central role in oligodendrocyte maturation and CNS myelination. The polypeptide is Myelin regulatory factor (myrf) (Xenopus laevis (African clawed frog)).